The chain runs to 354 residues: Protein Wnt-11 (354 aa).

Residues M1–G24 form the signal peptide. Residues N40 and N90 are each glycosylated (N-linked (GlcNAc...) asparagine). Intrachain disulfides connect C80/C91, C130/C138, and C140/C157. The N-linked (GlcNAc...) asparagine glycan is linked to N160. 8 disulfide bridges follow: C209–C223, C211–C218, C283–C314, C299–C309, C313–C353, C329–C344, C331–C341, and C336–C337. S215 carries O-palmitoleoyl serine; by PORCN lipidation. 2 N-linked (GlcNAc...) asparagine glycosylation sites follow: N300 and N304.

It belongs to the Wnt family. Palmitoleoylation is required for efficient binding to frizzled receptors. Depalmitoleoylation leads to Wnt signaling pathway inhibition.

It is found in the secreted. It localises to the extracellular space. The protein resides in the extracellular matrix. Ligand for members of the frizzled family of seven transmembrane receptors. Probable developmental protein. May be a signaling molecule which affects the development of discrete regions of tissues. Is likely to signal over only few cell diameters. In Mus musculus (Mouse), this protein is Protein Wnt-11 (Wnt11).